The sequence spans 426 residues: Transcriptional enhancer factor TEF-1 (426 aa).

At M1 the chain carries N-acetylmethionine. The span at 1-12 shows a compositional bias: polar residues; the sequence is MEPSSWSGSESP. Residues 1-31 form a disordered region; the sequence is MEPSSWSGSESPAENMERMSDSADKPIDNDA. S11 is modified (phosphoserine). A compositionally biased stretch (basic and acidic residues) spans 15–28; the sequence is NMERMSDSADKPID. Residues 28–104 constitute a DNA-binding region (TEA); the sequence is DNDAEGVWSP…QVLARRKSRD (77 aa). An N6-lactoyllysine modification is found at K108. Positions 167 to 426 are transcriptional activation; it reads GSSQDVKPFV…QHHIYRLVKD (260 aa).

Interacts with YAP1 and WWTR1/TAZ. Lactylation by AARS1 promotes nuclear localization and stabilization of YAP1, leading to increased Hippo signaling pathway. Delactylated by SIRT1. As to expression, preferentially expressed in skeletal muscle. Lower levels in pancreas, placenta, and heart.

It is found in the nucleus. Its function is as follows. Transcription factor which plays a key role in the Hippo signaling pathway, a pathway involved in organ size control and tumor suppression by restricting proliferation and promoting apoptosis. The core of this pathway is composed of a kinase cascade wherein MST1/MST2, in complex with its regulatory protein SAV1, phosphorylates and activates LATS1/2 in complex with its regulatory protein MOB1, which in turn phosphorylates and inactivates YAP1 oncoprotein and WWTR1/TAZ. Acts by mediating gene expression of YAP1 and WWTR1/TAZ, thereby regulating cell proliferation, migration and epithelial mesenchymal transition (EMT) induction. Binds specifically and cooperatively to the SPH and GT-IIC 'enhansons' (5'-GTGGAATGT-3') and activates transcription in vivo in a cell-specific manner. The activation function appears to be mediated by a limiting cell-specific transcriptional intermediary factor (TIF). Involved in cardiac development. Binds to the M-CAT motif. This Homo sapiens (Human) protein is Transcriptional enhancer factor TEF-1 (TEAD1).